The chain runs to 32 residues: Cytochrome b6-f complex subunit 7 (32 aa).

Residues 5–25 traverse the membrane as a helical segment; sequence IFTVAGVMWALVLTGLSVGFG.

The protein belongs to the PetM family. As to quaternary structure, the 4 large subunits of the cytochrome b6-f complex are cytochrome b6, subunit IV (17 kDa polypeptide, PetD), cytochrome f and the Rieske protein, while the 4 small subunits are PetG, PetL, PetM and PetN. The complex functions as a dimer.

It localises to the plastid. It is found in the chloroplast thylakoid membrane. In terms of biological role, component of the cytochrome b6-f complex, which mediates electron transfer between photosystem II (PSII) and photosystem I (PSI), cyclic electron flow around PSI, and state transitions. The polypeptide is Cytochrome b6-f complex subunit 7 (Emiliania huxleyi (Coccolithophore)).